A 396-amino-acid polypeptide reads, in one-letter code: Mitogen-activated protein kinase mpkC (396 aa).

The Protein kinase domain occupies 20–299 (YSDLQPVGLG…AAKALEHPYL (280 aa)). ATP-binding positions include 26 to 34 (VGLGAFGLV) and Lys49. Asp141 (proton acceptor) is an active-site residue. Position 171 is a phosphothreonine (Thr171). The TXY signature appears at 171-173 (TGY). At Tyr173 the chain carries Phosphotyrosine.

Belongs to the protein kinase superfamily. Ser/Thr protein kinase family. MAP kinase subfamily. HOG1 sub-subfamily. Requires Mg(2+) as cofactor. In terms of processing, dually phosphorylated on Thr-171 and Tyr-173, which activates the enzyme.

The catalysed reaction is L-seryl-[protein] + ATP = O-phospho-L-seryl-[protein] + ADP + H(+). The enzyme catalyses L-threonyl-[protein] + ATP = O-phospho-L-threonyl-[protein] + ADP + H(+). With respect to regulation, activated by tyrosine and threonine phosphorylation. Its function is as follows. Mitogen-activated protein kinase required for growth on media where sorbitol or mannitol is the sole carbon source. In Aspergillus niger (strain ATCC MYA-4892 / CBS 513.88 / FGSC A1513), this protein is Mitogen-activated protein kinase mpkC (mpkC).